We begin with the raw amino-acid sequence, 422 residues long: UDP-N-acetylglucosamine 1-carboxyvinyltransferase (422 aa).

22–23 (KN) is a phosphoenolpyruvate binding site. Arginine 93 is a UDP-N-acetyl-alpha-D-glucosamine binding site. Cysteine 117 functions as the Proton donor in the catalytic mechanism. Cysteine 117 carries the post-translational modification 2-(S-cysteinyl)pyruvic acid O-phosphothioketal. Residues 122–126 (RPVDQ), aspartate 305, and isoleucine 327 contribute to the UDP-N-acetyl-alpha-D-glucosamine site.

The protein belongs to the EPSP synthase family. MurA subfamily.

The protein localises to the cytoplasm. It catalyses the reaction phosphoenolpyruvate + UDP-N-acetyl-alpha-D-glucosamine = UDP-N-acetyl-3-O-(1-carboxyvinyl)-alpha-D-glucosamine + phosphate. It functions in the pathway cell wall biogenesis; peptidoglycan biosynthesis. In terms of biological role, cell wall formation. Adds enolpyruvyl to UDP-N-acetylglucosamine. This Bordetella bronchiseptica (strain ATCC BAA-588 / NCTC 13252 / RB50) (Alcaligenes bronchisepticus) protein is UDP-N-acetylglucosamine 1-carboxyvinyltransferase.